We begin with the raw amino-acid sequence, 95 residues long: Protein ECS1 (95 aa).

An N-terminal signal peptide occupies residues 1-27 (MASSIVSSMFLFLLLLLVFPHIDNVLG).

As to expression, expressed in leaves, flowers and stems, but not in roots.

It localises to the secreted. The protein localises to the cell wall. Maybe involved in defense responses to X.campestris, but probably not a X.campestris pv. campestris race 750 (e.g. Xcc750) resistance gene; according to genetic data, linked to a locus influencing resistance to Xcc750. The sequence is that of Protein ECS1 from Arabidopsis thaliana (Mouse-ear cress).